The primary structure comprises 366 residues: Peptide chain release factor 2 (366 aa).

Gln251 carries the N5-methylglutamine modification.

Belongs to the prokaryotic/mitochondrial release factor family. In terms of processing, methylated by PrmC. Methylation increases the termination efficiency of RF2.

It localises to the cytoplasm. Functionally, peptide chain release factor 2 directs the termination of translation in response to the peptide chain termination codons UGA and UAA. The chain is Peptide chain release factor 2 (prfB) from Listeria innocua serovar 6a (strain ATCC BAA-680 / CLIP 11262).